We begin with the raw amino-acid sequence, 189 residues long: Crossover junction endodeoxyribonuclease RuvC (189 aa).

Active-site residues include aspartate 11, glutamate 71, and aspartate 143. Mg(2+) contacts are provided by aspartate 11, glutamate 71, and aspartate 143.

Belongs to the RuvC family. In terms of assembly, homodimer which binds Holliday junction (HJ) DNA. The HJ becomes 2-fold symmetrical on binding to RuvC with unstacked arms; it has a different conformation from HJ DNA in complex with RuvA. In the full resolvosome a probable DNA-RuvA(4)-RuvB(12)-RuvC(2) complex forms which resolves the HJ. Mg(2+) is required as a cofactor.

It is found in the cytoplasm. It catalyses the reaction Endonucleolytic cleavage at a junction such as a reciprocal single-stranded crossover between two homologous DNA duplexes (Holliday junction).. Its function is as follows. The RuvA-RuvB-RuvC complex processes Holliday junction (HJ) DNA during genetic recombination and DNA repair. Endonuclease that resolves HJ intermediates. Cleaves cruciform DNA by making single-stranded nicks across the HJ at symmetrical positions within the homologous arms, yielding a 5'-phosphate and a 3'-hydroxyl group; requires a central core of homology in the junction. The consensus cleavage sequence is 5'-(A/T)TT(C/G)-3'. Cleavage occurs on the 3'-side of the TT dinucleotide at the point of strand exchange. HJ branch migration catalyzed by RuvA-RuvB allows RuvC to scan DNA until it finds its consensus sequence, where it cleaves and resolves the cruciform DNA. The sequence is that of Crossover junction endodeoxyribonuclease RuvC from Methylorubrum populi (strain ATCC BAA-705 / NCIMB 13946 / BJ001) (Methylobacterium populi).